We begin with the raw amino-acid sequence, 403 residues long: Soluble calcium-activated nucleotidase 1 (403 aa).

The Cytoplasmic segment spans residues 1–44 (MPIQPFDQREWNEPMHSLRISVGGLPVLASMTKATDPRFRPRWR). Residues 45 to 61 (VILTSFVGAALLWLLYS) traverse the membrane as a helical; Signal-anchor for type II membrane protein segment. Topologically, residues 62 to 403 (HHQTPVSGRP…SVKYEGIEFI (342 aa)) are lumenal. Asn90 carries an N-linked (GlcNAc...) asparagine glycan. Residues Ser170, Asp171, Glu217, Glu286, Ser347, and Glu398 each contribute to the Ca(2+) site.

It belongs to the apyrase family. As to quaternary structure, monomer. Homodimer; dimerization is Ca(2+)-dependent. The cofactor is Ca(2+). In terms of tissue distribution, detected in intestine, thymus, heart, lung, spleen, kidney, liver, testis, skeletal muscle and brain.

It is found in the endoplasmic reticulum membrane. The protein resides in the golgi apparatus. The protein localises to the golgi stack membrane. The catalysed reaction is a ribonucleoside 5'-diphosphate + H2O = a ribonucleoside 5'-phosphate + phosphate + H(+). In terms of biological role, calcium-dependent nucleotidase with a preference for UDP. The order of activity with different substrates is UDP &gt; GDP &gt; IDP &gt;&gt; UTP &gt; CDP = GTP = ITP. Has very low activity towards ADP and even lower activity towards ATP. Does not hydrolyze AMP and GMP. Involved in proteoglycan synthesis. The chain is Soluble calcium-activated nucleotidase 1 (Cant1) from Rattus norvegicus (Rat).